A 449-amino-acid chain; its full sequence is Tubulin alpha-1B chain (449 aa).

Glutamine 11 contributes to the GTP binding site. An N6-acetyllysine modification is found at lysine 40. Positions 71, 140, 144, 145, 179, 206, and 228 each coordinate GTP. Glutamate 71 contributes to the Mg(2+) binding site. Residue glutamate 254 is part of the active site.

It belongs to the tubulin family. In terms of assembly, dimer of alpha and beta chains. A typical microtubule is a hollow water-filled tube with an outer diameter of 25 nm and an inner diameter of 15 nM. Alpha-beta heterodimers associate head-to-tail to form protofilaments running lengthwise along the microtubule wall with the beta-tubulin subunit facing the microtubule plus end conferring a structural polarity. Microtubules usually have 13 protofilaments but different protofilament numbers can be found in some organisms and specialized cells. The cofactor is Mg(2+). In terms of processing, acetylation of alpha chains at Lys-40 stabilizes microtubules and affects affinity and processivity of microtubule motors. This modification has a role in multiple cellular functions, ranging from cell motility, cell cycle progression or cell differentiation to intracellular trafficking and signaling.

Its subcellular location is the cytoplasm. It localises to the cytoskeleton. It is found in the spindle. The protein localises to the nucleus. It catalyses the reaction GTP + H2O = GDP + phosphate + H(+). Functionally, tubulin is the major constituent of microtubules, a cylinder consisting of laterally associated linear protofilaments composed of alpha- and beta-tubulin heterodimers. Microtubules grow by the addition of GTP-tubulin dimers to the microtubule end, where a stabilizing cap forms. Below the cap, tubulin dimers are in GDP-bound state, owing to GTPase activity of alpha-tubulin. The polypeptide is Tubulin alpha-1B chain (ALTBN) (Physarum polycephalum (Slime mold)).